The following is a 203-amino-acid chain: Small ribosomal subunit protein uS4c (203 aa).

The 59-residue stretch at 92–150 folds into the S4 RNA-binding domain; that stretch reads MRLDNIIYRLGMAPTIANARQLVNHGHIVVNDRIVTIPSYRCKPKDIISVRNNSTSRNV.

It belongs to the universal ribosomal protein uS4 family. In terms of assembly, part of the 30S ribosomal subunit. Contacts protein S5. The interaction surface between S4 and S5 is involved in control of translational fidelity.

Its subcellular location is the plastid. The protein localises to the chloroplast. One of the primary rRNA binding proteins, it binds directly to 16S rRNA where it nucleates assembly of the body of the 30S subunit. Its function is as follows. With S5 and S12 plays an important role in translational accuracy. The protein is Small ribosomal subunit protein uS4c (rps4) of Chlorokybus atmophyticus (Soil alga).